The following is a 61-amino-acid chain: Metallothionein-2 (61 aa).

Met-1 is subject to N-acetylmethionine. A beta region spans residues 1 to 29 (MDPNCSCVAGDSCTCAGSCKCKECKCTSC). A divalent metal cation-binding residues include Cys-5, Cys-7, Cys-13, Cys-15, Cys-19, Cys-21, Cys-24, Cys-26, Cys-29, Cys-33, Cys-34, Cys-36, Cys-37, Cys-41, Cys-44, Cys-48, Cys-50, Cys-57, Cys-59, and Cys-60. Residues 20 to 25 (KCKECK) form an antigenic epitope region. The segment at 30–61 (KKSCCSCCPVGCAKCAQGCICKGASDKCNCCA) is alpha.

This sequence belongs to the metallothionein superfamily. Type 1 family.

Its function is as follows. Metallothioneins have a high content of cysteine residues that bind various heavy metals; these proteins are transcriptionally regulated by both heavy metals and glucocorticoids. This chain is Metallothionein-2 (MT2), found in Macaca fascicularis (Crab-eating macaque).